Reading from the N-terminus, the 154-residue chain is 6,7-dimethyl-8-ribityllumazine synthase (154 aa).

5-amino-6-(D-ribitylamino)uracil contacts are provided by residues F22, S56 to E58, and A80 to I82. S85 to T86 is a binding site for (2S)-2-hydroxy-3-oxobutyl phosphate. Residue H88 is the Proton donor of the active site. Y113 lines the 5-amino-6-(D-ribitylamino)uracil pocket. R127 is a (2S)-2-hydroxy-3-oxobutyl phosphate binding site.

It belongs to the DMRL synthase family. As to quaternary structure, forms an icosahedral capsid composed of 60 subunits, arranged as a dodecamer of pentamers.

It catalyses the reaction (2S)-2-hydroxy-3-oxobutyl phosphate + 5-amino-6-(D-ribitylamino)uracil = 6,7-dimethyl-8-(1-D-ribityl)lumazine + phosphate + 2 H2O + H(+). Its pathway is cofactor biosynthesis; riboflavin biosynthesis; riboflavin from 2-hydroxy-3-oxobutyl phosphate and 5-amino-6-(D-ribitylamino)uracil: step 1/2. Its function is as follows. Catalyzes the formation of 6,7-dimethyl-8-ribityllumazine by condensation of 5-amino-6-(D-ribitylamino)uracil with 3,4-dihydroxy-2-butanone 4-phosphate. This is the penultimate step in the biosynthesis of riboflavin. This chain is 6,7-dimethyl-8-ribityllumazine synthase, found in Persephonella marina (strain DSM 14350 / EX-H1).